The sequence spans 261 residues: NAD-capped RNA hydrolase NudC (261 aa).

K25 and R69 together coordinate substrate. Zn(2+) is bound by residues C98 and C101. Residue E111 participates in substrate binding. Residues C116 and C119 each contribute to the Zn(2+) site. Position 124 (Y124) interacts with substrate. The Nudix hydrolase domain occupies P125–T248. 3 residues coordinate a divalent metal cation: A158, E174, and E178. The Nudix box signature appears at G159–N180. Q192–S199 is a binding site for substrate. E219 is an a divalent metal cation binding site. A241 lines the substrate pocket.

Belongs to the Nudix hydrolase family. NudC subfamily. As to quaternary structure, homodimer. It depends on Mg(2+) as a cofactor. Requires Mn(2+) as cofactor. Zn(2+) is required as a cofactor.

It catalyses the reaction a 5'-end NAD(+)-phospho-ribonucleoside in mRNA + H2O = a 5'-end phospho-adenosine-phospho-ribonucleoside in mRNA + beta-nicotinamide D-ribonucleotide + 2 H(+). It carries out the reaction NAD(+) + H2O = beta-nicotinamide D-ribonucleotide + AMP + 2 H(+). The catalysed reaction is NADH + H2O = reduced beta-nicotinamide D-ribonucleotide + AMP + 2 H(+). Its function is as follows. mRNA decapping enzyme that specifically removes the nicotinamide adenine dinucleotide (NAD) cap from a subset of mRNAs by hydrolyzing the diphosphate linkage to produce nicotinamide mononucleotide (NMN) and 5' monophosphate mRNA. The NAD-cap is present at the 5'-end of some mRNAs and stabilizes RNA against 5'-processing. Has preference for mRNAs with a 5'-end purine. Catalyzes the hydrolysis of a broad range of dinucleotide pyrophosphates. The protein is NAD-capped RNA hydrolase NudC of Yersinia enterocolitica serotype O:8 / biotype 1B (strain NCTC 13174 / 8081).